The sequence spans 133 residues: Small ribosomal subunit protein bS6 (133 aa).

Belongs to the bacterial ribosomal protein bS6 family.

Functionally, binds together with bS18 to 16S ribosomal RNA. In Chlorobium phaeovibrioides (strain DSM 265 / 1930) (Prosthecochloris vibrioformis (strain DSM 265)), this protein is Small ribosomal subunit protein bS6.